Consider the following 57-residue polypeptide: MSKTVVRKNESLEDALRRFKRSVSKTGTLQEARKREFYEKPSVKRKKKSEAARKRKF.

Belongs to the bacterial ribosomal protein bS21 family.

The protein is Small ribosomal subunit protein bS21 of Bacillus pumilus (strain SAFR-032).